The following is a 152-amino-acid chain: Arginine repressor (152 aa).

Belongs to the ArgR family.

Its subcellular location is the cytoplasm. It functions in the pathway amino-acid biosynthesis; L-arginine biosynthesis [regulation]. Functionally, regulates arginine biosynthesis genes. The sequence is that of Arginine repressor from Lactococcus lactis subsp. lactis (strain IL1403) (Streptococcus lactis).